The primary structure comprises 570 residues: NADPH oxidase 2 (570 aa).

Topologically, residues 2–9 (GNWAVNEG) are cytoplasmic. Residues 10 to 36 (LSIFVILVWLGLNVFLFVWYYRVYDIP) form a helical membrane-spanning segment. At 37–46 (PKFFYTRKLL) the chain is on the extracellular side. The helical transmembrane segment at 47–72 (GSALALARAPAACLNFNCMLILLPVC) threads the bilayer. The 233-residue stretch at 54–286 (RAPAACLNFN…MFLYLCERLV (233 aa)) folds into the Ferric oxidoreductase domain. Topologically, residues 73–95 (RNLLSFLRGSSACCSTRVRRQLD) are cytoplasmic. A helical transmembrane segment spans residues 96 to 130 (RNLTFHKMVAWMIALHSAIHTIAHLFNVEWCVNAR). Heme b contacts are provided by His-101 and His-115. Over 131-163 (VNNSDPYSVALSELGDRQNESYLNFARKRIKNP) the chain is Extracellular. Asn-132 and Asn-149 each carry an N-linked (GlcNAc...) asparagine glycan. Lys-161 is covalently cross-linked (Glycyl lysine isopeptide (Lys-Gly) (interchain with G-Cter in ubiquitin)). A helical transmembrane segment spans residues 164–194 (EGGLYLAVTLLAGITGVVITLCLILIITSST). Residues 195–203 (KTIRRSYFE) lie on the Cytoplasmic side of the membrane. Residues Arg-199 and Ser-200 each contribute to the FAD site. A helical membrane pass occupies residues 204–222 (VFWYTHHLFVIFFIGLAIH). Heme b-binding residues include Trp-206, His-209, His-222, Arg-226, and Ile-227. Topologically, residues 223–267 (GAERIVRGQTAESLAVHNITVCEQKISEWGKIKECPIPQFAGNPP) are extracellular. Asn-240 carries an N-linked (GlcNAc...) asparagine glycan. Lys-255 is covalently cross-linked (Glycyl lysine isopeptide (Lys-Gly) (interchain with G-Cter in ubiquitin)). Positions 268, 280, and 287 each coordinate heme b. The helical transmembrane segment at 268-285 (MTWKWIVGPMFLYLCERL) threads the bilayer. Topologically, residues 286–570 (VRFWRSQQKV…VHFIFNKENF (285 aa)) are cytoplasmic. The region spanning 287–397 (RFWRSQQKVV…DGPFGTASED (111 aa)) is the FAD-binding FR-type domain. Glycyl lysine isopeptide (Lys-Gly) (interchain with G-Cter in ubiquitin) cross-links involve residues Lys-294, Lys-299, Lys-306, Lys-328, and Lys-334. Trp-337, His-338, Pro-339, Thr-341, His-354, Arg-356, Trp-361, and Thr-362 together coordinate FAD. Lys-381 participates in a covalent cross-link: Glycyl lysine isopeptide (Lys-Gly) (interchain with G-Cter in ubiquitin). NADPH is bound by residues Ile-411, Arg-446, and Thr-481. A Glycyl lysine isopeptide (Lys-Gly) (interchain with G-Cter in ubiquitin) cross-link involves residue Lys-506. Arg-513 lines the NADPH pocket. A Glycyl lysine isopeptide (Lys-Gly) (interchain with G-Cter in ubiquitin) cross-link involves residue Lys-567.

As to quaternary structure, component of the phagocyte NADPH oxidase core complex/cytochrome b558 complex, composed of CYBB (heavy chain (beta)) and CYBA (light chain (alpha)). Component of the phagocyte NADPH oxidase complex composed of an obligatory core heterodimer formed by the membrane proteins CYBA and CYBB and the cytosolic regulatory subunits NCF1/p47-phox, NCF2/p67-phox, NCF4/p40-phox and the small GTPase RAC1 or RAC2. Interacts with NCF1 (phosphorylated form). Interacts with NCF2; the interaction is enhanced in the presence of GBP7. Interacts with RAC2. Interacts with RAC1. Interacts with calprotectin (S100A8/9). Interacts with NRROS; the interaction is direct and impairs formation of a stable NADPH oxidase complex. Interacts with CYBC1; CYBC1 may act as a chaperone stabilizing Cytochrome b-245 heterodimer. The CYBA-CYBB complex interacts with GBP7. It depends on FAD as a cofactor. In terms of processing, glycosylated. Phosphorylated on Ser and Thr residues by PKC during neutrophils activation. Phosphorylation enhances the NADPH oxidase activity and stimulates its interaction with RAC2, NCF2/p67-phox, and NCF1/p47-phox. Post-translationally, undergoes 'Lys-48'-linked polyubiquitination, likely by RNF145, triggering endoplasmic reticulum-associated degradation. Detected in neutrophils (at protein level).

The protein localises to the cell membrane. It carries out the reaction NADPH + 2 O2 = 2 superoxide + NADP(+) + H(+). Its function is as follows. Catalytic subunit of the phagocyte NADPH oxidase complex that mediates the transfer of electrons from cytosolic NADPH to O2 to produce the superoxide anion (O2(-)). In the activated complex, electrons are first transferred from NADPH to flavin adenine dinucleotide (FAD) and subsequently transferred via two heme molecules to molecular oxygen, producing superoxide through an outer-sphere reaction. Activation of the NADPH oxidase complex is initiated by the assembly of cytosolic subunits of the NADPH oxidase complex with the core NADPH oxidase complex to form a complex at the plasma membrane or phagosomal membrane. This activation process is initiated by phosphorylation dependent binding of the cytosolic NCF1/p47-phox subunit to the C-terminus of CYBA/p22-phox. NADPH oxidase complex assembly is impaired through interaction with NRROS. The polypeptide is NADPH oxidase 2 (Homo sapiens (Human)).